Reading from the N-terminus, the 240-residue chain is UDP-2,3-diacylglucosamine hydrolase (240 aa).

Residues D8, H10, D41, N79, and H114 each coordinate Mn(2+). 79-80 provides a ligand contact to substrate; that stretch reads NR. Residues D122, S160, N164, K167, and H195 each contribute to the substrate site. Residues H195 and H197 each contribute to the Mn(2+) site.

The protein belongs to the LpxH family. Mn(2+) serves as cofactor.

It is found in the cell inner membrane. The catalysed reaction is UDP-2-N,3-O-bis[(3R)-3-hydroxytetradecanoyl]-alpha-D-glucosamine + H2O = 2-N,3-O-bis[(3R)-3-hydroxytetradecanoyl]-alpha-D-glucosaminyl 1-phosphate + UMP + 2 H(+). The protein operates within glycolipid biosynthesis; lipid IV(A) biosynthesis; lipid IV(A) from (3R)-3-hydroxytetradecanoyl-[acyl-carrier-protein] and UDP-N-acetyl-alpha-D-glucosamine: step 4/6. Hydrolyzes the pyrophosphate bond of UDP-2,3-diacylglucosamine to yield 2,3-diacylglucosamine 1-phosphate (lipid X) and UMP by catalyzing the attack of water at the alpha-P atom. Involved in the biosynthesis of lipid A, a phosphorylated glycolipid that anchors the lipopolysaccharide to the outer membrane of the cell. This chain is UDP-2,3-diacylglucosamine hydrolase, found in Escherichia coli O6:H1 (strain CFT073 / ATCC 700928 / UPEC).